The sequence spans 78 residues: MPKRILQGVVVSDKNEKTVVVRVERRFAHPLMQKTVRRSKKYKAHDENNQYKVGDVVSIEECAPISKDKRWTVVAAQA.

It belongs to the universal ribosomal protein uS17 family. Part of the 30S ribosomal subunit.

In terms of biological role, one of the primary rRNA binding proteins, it binds specifically to the 5'-end of 16S ribosomal RNA. This is Small ribosomal subunit protein uS17 from Agrobacterium fabrum (strain C58 / ATCC 33970) (Agrobacterium tumefaciens (strain C58)).